The sequence spans 168 residues: Phosphopantetheine adenylyltransferase (168 aa).

Ser9 is a substrate binding site. Residues 9–10 and His17 contribute to the ATP site; that span reads SF. Substrate contacts are provided by Lys41, Leu73, and Arg87. ATP-binding positions include 88–90, Glu98, and 123–129; these read GMR and WIYTSSS.

This sequence belongs to the bacterial CoaD family. As to quaternary structure, homohexamer. Mg(2+) serves as cofactor.

It is found in the cytoplasm. The enzyme catalyses (R)-4'-phosphopantetheine + ATP + H(+) = 3'-dephospho-CoA + diphosphate. The protein operates within cofactor biosynthesis; coenzyme A biosynthesis; CoA from (R)-pantothenate: step 4/5. Its function is as follows. Reversibly transfers an adenylyl group from ATP to 4'-phosphopantetheine, yielding dephospho-CoA (dPCoA) and pyrophosphate. The protein is Phosphopantetheine adenylyltransferase of Desulfosudis oleivorans (strain DSM 6200 / JCM 39069 / Hxd3) (Desulfococcus oleovorans).